Reading from the N-terminus, the 380-residue chain is Cytochrome b (380 aa).

4 consecutive transmembrane segments (helical) span residues 33 to 53 (FGSLLGLCLIAQILTGLFLAM), 77 to 98 (WLIRNFHANGASFFFICLYLHV), 113 to 133 (WNIGVVLLLLVMMTAFVGYVL), and 178 to 198 (FFAFHFLFPFIIAAMVILHLL). The heme b site is built by His-83 and His-97. His-182 and His-196 together coordinate heme b. A ubiquinone is bound at residue His-201. The next 4 membrane-spanning stretches (helical) occupy residues 226 to 246 (YKDLFGFVILLLALSVLALFS), 288 to 308 (LGGVLALLASILILMVVPLLH), 320 to 340 (LTQILFWTLVADVAILTWIGG), and 347 to 367 (FITVGQVASVLYFALFLIFIP).

It belongs to the cytochrome b family. The cytochrome bc1 complex contains 3 respiratory subunits (MT-CYB, CYC1 and UQCRFS1), 2 core proteins (UQCRC1 and UQCRC2) and probably 6 low-molecular weight proteins. Requires heme b as cofactor.

The protein localises to the mitochondrion inner membrane. Its function is as follows. Component of the ubiquinol-cytochrome c reductase complex (complex III or cytochrome b-c1 complex) that is part of the mitochondrial respiratory chain. The b-c1 complex mediates electron transfer from ubiquinol to cytochrome c. Contributes to the generation of a proton gradient across the mitochondrial membrane that is then used for ATP synthesis. The sequence is that of Cytochrome b (mt-cyb) from Neocyttus rhomboidalis (Spiky oreo dory).